Reading from the N-terminus, the 442-residue chain is Serine--tRNA ligase (442 aa).

Residue 244 to 246 (TAE) coordinates L-serine. Residue 275 to 277 (RAE) coordinates ATP. Glu-298 is an L-serine binding site. 365 to 368 (EISS) is a binding site for ATP. Residue Ser-400 participates in L-serine binding.

This sequence belongs to the class-II aminoacyl-tRNA synthetase family. Type-1 seryl-tRNA synthetase subfamily. In terms of assembly, homodimer. The tRNA molecule binds across the dimer.

It is found in the cytoplasm. It carries out the reaction tRNA(Ser) + L-serine + ATP = L-seryl-tRNA(Ser) + AMP + diphosphate + H(+). The enzyme catalyses tRNA(Sec) + L-serine + ATP = L-seryl-tRNA(Sec) + AMP + diphosphate + H(+). Its pathway is aminoacyl-tRNA biosynthesis; selenocysteinyl-tRNA(Sec) biosynthesis; L-seryl-tRNA(Sec) from L-serine and tRNA(Sec): step 1/1. In terms of biological role, catalyzes the attachment of serine to tRNA(Ser). Is also able to aminoacylate tRNA(Sec) with serine, to form the misacylated tRNA L-seryl-tRNA(Sec), which will be further converted into selenocysteinyl-tRNA(Sec). This Bradyrhizobium sp. (strain ORS 278) protein is Serine--tRNA ligase.